The following is a 668-amino-acid chain: UvrABC system protein B (668 aa).

Residues 25 to 170 (NSILLGNKYQ…FVGQKISIKE (146 aa)) enclose the Helicase ATP-binding domain. Residue 38–45 (GVTGSGKT) participates in ATP binding. The Beta-hairpin motif lies at 91–114 (YYDYYQPESYVPSKDLFIEKEATI). One can recognise a Helicase C-terminal domain in the interval 429 to 595 (QMEDLYSEIQ…TIVKKIQNIL (167 aa)). The region spanning 622–657 (KKLIDKLKFDLEEAVNDERFEDAIVLRDKIKELSSK) is the UVR domain.

It belongs to the UvrB family. Forms a heterotetramer with UvrA during the search for lesions. Interacts with UvrC in an incision complex.

The protein localises to the cytoplasm. In terms of biological role, the UvrABC repair system catalyzes the recognition and processing of DNA lesions. A damage recognition complex composed of 2 UvrA and 2 UvrB subunits scans DNA for abnormalities. Upon binding of the UvrA(2)B(2) complex to a putative damaged site, the DNA wraps around one UvrB monomer. DNA wrap is dependent on ATP binding by UvrB and probably causes local melting of the DNA helix, facilitating insertion of UvrB beta-hairpin between the DNA strands. Then UvrB probes one DNA strand for the presence of a lesion. If a lesion is found the UvrA subunits dissociate and the UvrB-DNA preincision complex is formed. This complex is subsequently bound by UvrC and the second UvrB is released. If no lesion is found, the DNA wraps around the other UvrB subunit that will check the other stand for damage. This Borreliella burgdorferi (strain ZS7) (Borrelia burgdorferi) protein is UvrABC system protein B.